The sequence spans 1755 residues: MESQQLSQHSHISHGSACASVTSKEVHTNQDPLDVSASKTEECEKASTKANSQQTTTPASSAVPENPHHASPQPASVPPPQNGPYPQQCMMTQNQANPSGWSFYGHPSMIPYTPYQMSPMYFPPGPQSQFPQYPSSVGTPLSTPSPESGNTFTDSSSADSDMTSTKKYVRPPPMLTSPNDFPNWVKTYIKFLQNSNLGGIIPTVNGKPVRQITDDELTFLYNTFQIFAPSQFLPTWVKDILSVDYTDIMKILSKSIEKMQSDTQEANDIVTLANLQYNGSTPADAFETKVTNIIDRLNNNGIHINNKVACQLIMRGLSGEYKFLRYTRHRHLNMTVAELFLDIHAIYEEQQGSRNSKPNYRRNLSDEKNDSRSYTNTTKPKVIARNPQKTNNSKSKTARAHNVSTSNNSPSTDNDSISKSTTEPIQLNNKHDLHLGQELTESTVNHTNHSDDELPGHLLLDSGASRTLIRSAHHIHSASSNPDINVVDAQKRNIPINAIGDLQFHFQDNTKTSIKVLHTPNIAYDLLSLNELAAVDITACFTKNVLERSDGTVLAPIVKYGDFYWVSKKYLLPSNISVPTINNVHTSESTRKYPYPFIHRMLAHANAQTIRYSLKNNTITYFNESDVDRSSAIDYQCPDCLIGKSTKHRHIKGSRLKYQNSYEPFQYLHTDIFGPVHNLPKSAPSYFISFTDETTKFRWVYPLHDRREDSILDVFTTILAFIKNQFQASVLVIQMDRGSEYTNRTLHKFLEKNGITPCYTTTADSRAHGVAERLNRTLLDDCRTQLQCSGLPNHLWFSAIEFSTIVRNSLASPKSKKSARQHAGLAGLDISTLLPFGQPVIVNDHNPNSKIHPRGIPGYALHPSRNSYGYIIYLPSLKKTVDTTNYVILQGKESRLDQFNYDALTFDEDLNRLTASYQSFIASNEIQQSDDLNIESDHDFQSDIELHPEQPRNVLSKAVSPTDSTPPSTHTEDSKRVSKTNIRAPREVDPNISESNILPSKKRSSTPQISNIESTGSGGMHKLNVPLLAPMSQSNTHESSHASKSKDFRHSDSYSENETNHTNVPISSTGGTNNKTVPQISDQETEKRIIHRSPSIDASPPENNSSHNIVPIKTPTTVSEQNTEESIIADLPLPDLPPESPTEFPDPFKELPPINSHQTNSSLGGIGDSNAYTTINSKKRSLEDNETEIKVSRDTWNTKNMRSLEPPRSKKRIHLIAAVKAVKSIKPIRTTLRYDEAITYNKDIKEKEKYIEAYHKEVNQLLKMKTWDTDEYYDRKEIDPKRVINSMFIFNKKRDGTHKARFVARGDIQHPDTYDSGMQSNTVHHYALMTSLSLALDNNYYITQLDISSAYLYADIKEELYIRPPPHLGMNDKLIRLKKSLYGLKQSGANWYETIKSYLIKQCGMEEVRGWSCVFKNSQVTICLFVDDMILFSKDLNANKKIITTLKKQYDTKIINLGESDNEIQYDILGLEIKYQRGKYMKLGMENSLTEKIPKLNVPLNPKGRKLSAPGQPGLYIDQDELEIDEDEYKEKVHEMQKLIGLASYVGYKFRFDLLYYINTLAQHILFPSRQVLDMTYELIQFMWDTRDKQLIWHKNKPTEPDNKLVAISDASYGNQPYYKSQIGNIYLLNGKVIGGKSTKASLTCTSTTEAEIHAISESVPLLNNLSYLIQELNKKPIIKGLLTDSRSTISIIKSTNEEKFRNRFFGTKAMRLRDEVSGNNLYVYYIETKKNIADVMTKPLPIKTFKLLTNKWIH.

Residues 1 to 16 (MESQQLSQHSHISHGS) show a composition bias toward low complexity. Disordered regions lie at residues 1 to 93 (MESQ…MMTQ), 126 to 173 (PQSQ…RPPP), and 352 to 421 (GSRN…SKST). Composition is skewed to polar residues over residues 48 to 60 (TKAN…TPAS) and 127 to 152 (QSQF…GNTF). The span at 153-165 (TDSSSADSDMTST) shows a compositional bias: low complexity. The segment at 299-401 (NNGIHINNKV…NSKSKTARAH (103 aa)) is RNA-binding. The span at 402-418 (NVSTSNNSPSTDNDSIS) shows a compositional bias: low complexity. Ser-416 carries the phosphoserine modification. Asp-461 serves as the catalytic For protease activity; shared with dimeric partner. Residues 583 to 640 (NVHTSESTRKYPYPFIHRMLAHANAQTIRYSLKNNTITYFNESDVDRSSAIDYQCPDC) are integrase-type zinc finger-like. Residues 660-835 (NSYEPFQYLH…AGLDISTLLP (176 aa)) form the Integrase catalytic domain. Residues Asp-671 and Asp-736 each contribute to the Mg(2+) site. Disordered regions lie at residues 956 to 1087 (SKAV…ETEK), 1092 to 1111 (RSPS…NIVP), and 1130 to 1171 (DLPL…DSNA). A compositionally biased stretch (low complexity) spans 960–969 (SPTDSTPPST). The span at 1005 to 1015 (STPQISNIEST) shows a compositional bias: polar residues. The segment covering 1038 to 1053 (ESSHASKSKDFRHSDS) has biased composition (basic and acidic residues). Composition is skewed to polar residues over residues 1054-1082 (YSEN…QISD) and 1101-1111 (PENNSSHNIVP). A Bipartite nuclear localization signal motif is present at residues 1178-1212 (KKRSLEDNETEIKVSRDTWNTKNMRSLEPPRSKKR). The 139-residue stretch at 1338 to 1476 (NNYYITQLDI…DILGLEIKYQ (139 aa)) folds into the Reverse transcriptase Ty1/copia-type domain. Positions 1346, 1427, 1428, 1610, 1652, and 1685 each coordinate Mg(2+). Residues 1610–1752 (DASYGNQPYY…IKTFKLLTNK (143 aa)) enclose the RNase H Ty1/copia-type domain.

As to quaternary structure, the capsid protein forms a homotrimer, from which the VLPs are assembled. The protease is a homodimer, whose active site consists of two apposed aspartic acid residues. Post-translationally, initially, virus-like particles (VLPs) are composed of the structural unprocessed proteins Gag and Gag-Pol, and also contain the host initiator methionine tRNA (tRNA(i)-Met) which serves as a primer for minus-strand DNA synthesis, and a dimer of genomic Ty RNA. Processing of the polyproteins occurs within the particle and proceeds by an ordered pathway, called maturation. First, the protease (PR) is released by autocatalytic cleavage of the Gag-Pol polyprotein yielding capsid protein p45 and a Pol-p154 precursor protein. This cleavage is a prerequisite for subsequent processing of Pol-p154 at the remaining sites to release the mature structural and catalytic proteins. Maturation takes place prior to the RT reaction and is required to produce transposition-competent VLPs.

The protein resides in the cytoplasm. It localises to the nucleus. It carries out the reaction DNA(n) + a 2'-deoxyribonucleoside 5'-triphosphate = DNA(n+1) + diphosphate. The enzyme catalyses Endonucleolytic cleavage to 5'-phosphomonoester.. Its function is as follows. Capsid protein (CA) is the structural component of the virus-like particle (VLP), forming the shell that encapsulates the retrotransposons dimeric RNA genome. The particles are assembled from trimer-clustered units and there are holes in the capsid shells that allow for the diffusion of macromolecules. CA also has nucleocapsid-like chaperone activity, promoting primer tRNA(i)-Met annealing to the multipartite primer-binding site (PBS), dimerization of Ty1 RNA and initiation of reverse transcription. The aspartyl protease (PR) mediates the proteolytic cleavages of the Gag and Gag-Pol polyproteins after assembly of the VLP. Functionally, reverse transcriptase/ribonuclease H (RT) is a multifunctional enzyme that catalyzes the conversion of the retro-elements RNA genome into dsDNA within the VLP. The enzyme displays a DNA polymerase activity that can copy either DNA or RNA templates, and a ribonuclease H (RNase H) activity that cleaves the RNA strand of RNA-DNA heteroduplexes during plus-strand synthesis and hydrolyzes RNA primers. The conversion leads to a linear dsDNA copy of the retrotransposon that includes long terminal repeats (LTRs) at both ends. In terms of biological role, integrase (IN) targets the VLP to the nucleus, where a subparticle preintegration complex (PIC) containing at least integrase and the newly synthesized dsDNA copy of the retrotransposon must transit the nuclear membrane. Once in the nucleus, integrase performs the integration of the dsDNA into the host genome. This is Transposon Ty1-ML2 Gag-Pol polyprotein (TY1B-ML2) from Saccharomyces cerevisiae (strain ATCC 204508 / S288c) (Baker's yeast).